We begin with the raw amino-acid sequence, 892 residues long: Alanine--tRNA ligase (892 aa).

Residues His596, His600, Cys700, and His704 each contribute to the Zn(2+) site.

This sequence belongs to the class-II aminoacyl-tRNA synthetase family. Zn(2+) is required as a cofactor.

It localises to the cytoplasm. The catalysed reaction is tRNA(Ala) + L-alanine + ATP = L-alanyl-tRNA(Ala) + AMP + diphosphate. Its function is as follows. Catalyzes the attachment of alanine to tRNA(Ala) in a two-step reaction: alanine is first activated by ATP to form Ala-AMP and then transferred to the acceptor end of tRNA(Ala). Also edits incorrectly charged Ser-tRNA(Ala) and Gly-tRNA(Ala) via its editing domain. The chain is Alanine--tRNA ligase from Methanococcus vannielii (strain ATCC 35089 / DSM 1224 / JCM 13029 / OCM 148 / SB).